We begin with the raw amino-acid sequence, 348 residues long: Rhodopsin (348 aa).

Met1 carries the post-translational modification N-acetylmethionine. The Extracellular segment spans residues Met1 to Gln36. Asn2 and Asn15 each carry an N-linked (GlcNAc...) asparagine glycan. A helical transmembrane segment spans residues Phe37 to Val61. Residues Thr62–Asn73 lie on the Cytoplasmic side of the membrane. A helical membrane pass occupies residues Tyr74–Tyr96. Residues Thr97–Cys110 are Extracellular-facing. Cysteines 110 and 187 form a disulfide. Residues Asp111–Ile133 form a helical membrane-spanning segment. A 'Ionic lock' involved in activated form stabilization motif is present at residues Glu134–Tyr136. Residues Glu134–His152 lie on the Cytoplasmic side of the membrane. Residues Ala153–Val173 form a helical membrane-spanning segment. Residues Gly174–Ser202 are Extracellular-facing. A Zn(2+)-binding site is contributed by Glu201. A helical membrane pass occupies residues Phe203–Gly224. Over Gln225 to Arg252 the chain is Cytoplasmic. Residues Met253 to Tyr274 traverse the membrane as a helical segment. Residues Ile275–Ile286 are Extracellular-facing. Position 279 (Gln279) interacts with Zn(2+). Residues Leu287–Met308 form a helical membrane-spanning segment. Position 296 is an N6-(retinylidene)lysine (Lys296). Residues Leu309–Ala348 lie on the Cytoplasmic side of the membrane. S-palmitoyl cysteine attachment occurs at residues Cys322 and Cys323. The interaction with SAG stretch occupies residues Asp330 to Ala348. Ser334 carries the post-translational modification Phosphoserine. A Phosphothreonine modification is found at Thr336. The residue at position 338 (Ser338) is a Phosphoserine. 2 positions are modified to phosphothreonine: Thr340 and Thr342. Ser343 carries the post-translational modification Phosphoserine.

Belongs to the G-protein coupled receptor 1 family. Opsin subfamily. Homodimer. May form a complex composed of RHO, GRK1 and RCVRN in a Ca(2+)-dependent manner; RCVRN prevents the interaction between GRK1 and RHO. Interacts with GRK1. Interacts (phosphorylated form) with SAG. Interacts with GNAT1. Interacts with GNAT3. SAG and G-proteins compete for a common binding site. Interacts with PRCD; the interaction promotes PRCD stability. Forms a complex with ASAP1 and ARF4. Forms a complex with ASAP1, RAB11A, Rabin8/RAB3IP, ARF4 and RAB11FIP3; the complex regulates Golgi-to-cilia rhodopsin/RHO transport in photoreceptors. Phosphorylated on some or all of the serine and threonine residues present in the C-terminal region. Post-translationally, contains one covalently linked retinal chromophore. Upon light absorption, the covalently bound 11-cis-retinal is converted to all-trans-retinal. After hydrolysis of the Schiff base and release of the covalently bound all-trans-retinal, active rhodopsin is regenerated by binding of a fresh molecule of 11-cis-retinal.

It is found in the membrane. Its subcellular location is the cell projection. The protein localises to the cilium. The protein resides in the photoreceptor outer segment. In terms of biological role, photoreceptor required for image-forming vision at low light intensity. Required for photoreceptor cell viability after birth. Light-induced isomerization of 11-cis to all-trans retinal triggers a conformational change that activates signaling via G-proteins. Subsequent receptor phosphorylation mediates displacement of the bound G-protein alpha subunit by the arrestin SAG and terminates signaling. In Caluromys philander (Bare-tailed woolly opossum), this protein is Rhodopsin (RHO).